The chain runs to 334 residues: Glycerol-3-phosphate dehydrogenase [NAD(P)+] (334 aa).

NADPH contacts are provided by tryptophan 13, arginine 33, and lysine 106. Residues lysine 106, glycine 137, and serine 139 each coordinate sn-glycerol 3-phosphate. An NADPH-binding site is contributed by alanine 141. Positions 192, 245, 255, 256, and 257 each coordinate sn-glycerol 3-phosphate. Lysine 192 acts as the Proton acceptor in catalysis. Residue arginine 256 coordinates NADPH. The NADPH site is built by valine 280 and glutamate 282.

It belongs to the NAD-dependent glycerol-3-phosphate dehydrogenase family.

It localises to the cytoplasm. It catalyses the reaction sn-glycerol 3-phosphate + NAD(+) = dihydroxyacetone phosphate + NADH + H(+). It carries out the reaction sn-glycerol 3-phosphate + NADP(+) = dihydroxyacetone phosphate + NADPH + H(+). It functions in the pathway membrane lipid metabolism; glycerophospholipid metabolism. In terms of biological role, catalyzes the reduction of the glycolytic intermediate dihydroxyacetone phosphate (DHAP) to sn-glycerol 3-phosphate (G3P), the key precursor for phospholipid synthesis. This is Glycerol-3-phosphate dehydrogenase [NAD(P)+] from Chlamydia trachomatis serovar L2b (strain UCH-1/proctitis).